The sequence spans 238 residues: D-aminoacyl-tRNA deacylase (238 aa).

It belongs to the DtdA deacylase family. Monomer. Zn(2+) serves as cofactor.

It catalyses the reaction a D-aminoacyl-tRNA + H2O = a tRNA + a D-alpha-amino acid + H(+). It carries out the reaction glycyl-tRNA(Ala) + H2O = tRNA(Ala) + glycine + H(+). The enzyme catalyses D-tyrosyl-tRNA(Tyr) + H2O = D-tyrosine + tRNA(Tyr). Functionally, D-aminoacyl-tRNA deacylase with broad substrate specificity. By recycling D-aminoacyl-tRNA to D-amino acids and free tRNA molecules, this enzyme counteracts the toxicity associated with the formation of D-aminoacyl-tRNA entities in vivo. Catalyzes the hydrolysis of D-tyrosyl-tRNA(Tyr). In Saccharolobus solfataricus (strain ATCC 35092 / DSM 1617 / JCM 11322 / P2) (Sulfolobus solfataricus), this protein is D-aminoacyl-tRNA deacylase.